The following is a 160-amino-acid chain: Small RNA binding protein 1 (160 aa).

The RRM domain occupies 8–86 (FRCFVGGLAW…RNITVNEAQQ (79 aa)). Residues 82–160 (NEAQQRGGGG…GGGSEGGWRN (79 aa)) form a disordered region. Residues 87 to 160 (RGGGGGGGYN…GGGSEGGWRN (74 aa)) show a composition bias toward gly residues. The tract at residues 88–157 (GGGGGGGYNR…GSGGGGSEGG (70 aa)) is glycine-rich (GR) required for cell-to-cell movement.

It belongs to the GR-RBP family. In terms of assembly, binds to small phloem-mobile single-stranded RNAs (ss-sRNA, e.g. small interfering RNA (siRNA) and microRNA (miRNA)) in the phloeme exudate, including viral-derived sRNA (vsiRNA). Accumulates in phloem exudates.

Its subcellular location is the secreted. Possibly has a role in RNA transcription or processing during stress. Binds sequence non-specifically to RNAs and DNAs. Mediates cell-to-cell trafficking of RNA interference (RNAi) signals (small RNAs (sRNA), e.g. small interfering RNA (siRNA) and microRNA (miRNA)) which regulate growth and development, as well as responses to environmental inputs, including pathogen attack; can compromise zucchini yellow mosaic virus (ZYMV) and tobacco rattle virus (TRV) infections at the early stage. The chain is Small RNA binding protein 1 from Cucumis sativus (Cucumber).